The primary structure comprises 655 residues: p-hydroxybenzoic acid efflux pump subunit AaeB (655 aa).

A run of 11 helical transmembrane segments spans residues 13–33, 38–58, 69–89, 93–113, 121–141, 152–172, 370–390, 407–427, 431–451, 459–479, and 482–502; these read FAVK…HFQL, WAVL…GGEP, LRII…ISMI, LLMI…SSLV, WGLS…EPLL, EIVI…PRSI, LFWL…IAVV, FIYG…VIIP, QSML…GIEV, MGAL…TFHF, and FLDS…VILL.

Belongs to the aromatic acid exporter ArAE (TC 2.A.85) family.

It localises to the cell inner membrane. Functionally, forms an efflux pump with AaeA. Could function as a metabolic relief valve, allowing to eliminate certain compounds when they accumulate to high levels in the cell. This is p-hydroxybenzoic acid efflux pump subunit AaeB from Salmonella dublin (strain CT_02021853).